The following is a 380-amino-acid chain: Cytochrome b (380 aa).

4 helical membrane passes run 34 to 54 (FGSL…LLAM), 78 to 99 (WLIR…FLHI), 114 to 134 (WNTG…GYVL), and 179 to 199 (FFAL…IHLT). Positions 84 and 98 each coordinate heme b. Residues His-183 and His-197 each contribute to the heme b site. His-202 contributes to the a ubiquinone binding site. Transmembrane regions (helical) follow at residues 227 to 247 (FKDI…ALFS), 289 to 309 (LGGV…PFLH), 321 to 341 (LSQT…WIGS), and 348 to 368 (FIII…ILFP).

Belongs to the cytochrome b family. The cytochrome bc1 complex contains 11 subunits: 3 respiratory subunits (MT-CYB, CYC1 and UQCRFS1), 2 core proteins (UQCRC1 and UQCRC2) and 6 low-molecular weight proteins (UQCRH/QCR6, UQCRB/QCR7, UQCRQ/QCR8, UQCR10/QCR9, UQCR11/QCR10 and a cleavage product of UQCRFS1). This cytochrome bc1 complex then forms a dimer. Requires heme b as cofactor.

Its subcellular location is the mitochondrion inner membrane. Its function is as follows. Component of the ubiquinol-cytochrome c reductase complex (complex III or cytochrome b-c1 complex) that is part of the mitochondrial respiratory chain. The b-c1 complex mediates electron transfer from ubiquinol to cytochrome c. Contributes to the generation of a proton gradient across the mitochondrial membrane that is then used for ATP synthesis. The sequence is that of Cytochrome b (MT-CYB) from Gallus gallus (Chicken).